The sequence spans 338 residues: Glycerol-3-phosphate dehydrogenase [NAD(P)+] (338 aa).

Residues S13, W14, and K108 each contribute to the NADPH site. Sn-glycerol 3-phosphate is bound by residues K108, G139, and S141. A143 serves as a coordination point for NADPH. Sn-glycerol 3-phosphate-binding residues include K194, D247, S257, R258, and N259. Residue K194 is the Proton acceptor of the active site. Position 258 (R258) interacts with NADPH. NADPH is bound by residues V282 and E284.

This sequence belongs to the NAD-dependent glycerol-3-phosphate dehydrogenase family.

It localises to the cytoplasm. The enzyme catalyses sn-glycerol 3-phosphate + NAD(+) = dihydroxyacetone phosphate + NADH + H(+). The catalysed reaction is sn-glycerol 3-phosphate + NADP(+) = dihydroxyacetone phosphate + NADPH + H(+). It participates in membrane lipid metabolism; glycerophospholipid metabolism. Catalyzes the reduction of the glycolytic intermediate dihydroxyacetone phosphate (DHAP) to sn-glycerol 3-phosphate (G3P), the key precursor for phospholipid synthesis. The chain is Glycerol-3-phosphate dehydrogenase [NAD(P)+] from Listeria innocua serovar 6a (strain ATCC BAA-680 / CLIP 11262).